Consider the following 316-residue polypeptide: Retron Ec73 reverse transcriptase (316 aa).

In terms of domain architecture, Reverse transcriptase spans 1–243; that stretch reads MRIYSLIDSQ…GSIVVTGLKV (243 aa). Mg(2+) is bound by residues Asp-99, Asp-189, and Asp-190. Residues 247–316 form a necessary and required for recognition and binding of RNA region; sequence FHITLHRSMK…WIQNLHNKVE (70 aa).

Belongs to the bacterial reverse transcriptase family.

The catalysed reaction is DNA(n) + a 2'-deoxyribonucleoside 5'-triphosphate = DNA(n+1) + diphosphate. Functionally, reverse transcriptase (RT) component of antiviral defense system retron Ec73, composed of a non-coding RNA (ncRNA) followed by a ribosyltransferase/DNA-binding protein then a reverse transcriptase (RT). Expression of this retron confers protection against bacteriophages SECphi4, SECphi6, SECphi27 and P1. At multiplicity of infection (MOI) of 0.02 cultures grow normally when infected with SECphi4 without collapsing, at MOI 2 cultures enter growth stasis. Responsible for synthesis of msDNA-Ec73 (a branched molecule with RNA linked by a 2',5'-phosphodiester bond to ssDNA). The retron transcript serves as primer (from a conserved internal G residue) and template for the reaction, and codes for the RT. Recognizes only its cognate RNA as a primer template. This chain is Retron Ec73 reverse transcriptase, found in Escherichia coli.